A 276-amino-acid chain; its full sequence is Type II pantothenate kinase (276 aa).

8-15 contacts ATP; the sequence is DAGGTLTK. The active-site Proton acceptor is E76. ATP is bound by residues T105, 127–131, F143, and S230; that span reads GGTIM.

Belongs to the type II pantothenate kinase family. As to quaternary structure, homodimer.

It is found in the cytoplasm. It carries out the reaction (R)-pantothenate + ATP = (R)-4'-phosphopantothenate + ADP + H(+). Its pathway is cofactor biosynthesis; coenzyme A biosynthesis; CoA from (R)-pantothenate: step 1/5. Its function is as follows. Catalyzes the phosphorylation of pantothenate (Pan), the first step in CoA biosynthesis. This Bacillus cereus (strain ATCC 10987 / NRS 248) protein is Type II pantothenate kinase.